A 471-amino-acid chain; its full sequence is Putative multidrug resistance protein MdtD (471 aa).

The Periplasmic segment spans residues M1–Q11. Residues L12–A32 form a helical membrane-spanning segment. The Cytoplasmic segment spans residues L33–H48. Residues M49–A69 form a helical membrane-spanning segment. Residues D70 to N76 lie on the Periplasmic side of the membrane. The helical transmembrane segment at I77–T97 threads the bilayer. Over L98–L101 the chain is Cytoplasmic. A helical membrane pass occupies residues L102–M124. Over K125–T137 the chain is Periplasmic. A helical membrane pass occupies residues F138 to V158. Residues E159–H164 are Cytoplasmic-facing. The chain crosses the membrane as a helical span at residues W165–M185. At P186–D196 the chain is on the periplasmic side. Residues L197–S217 traverse the membrane as a helical segment. The Cytoplasmic portion of the chain corresponds to K218–P224. A helical transmembrane segment spans residues L225–A245. Topologically, residues Q246–T262 are periplasmic. A helical membrane pass occupies residues F263–M283. Topologically, residues T284 to P285 are cytoplasmic. Residues V286–M306 form a helical membrane-spanning segment. Residues V307–T341 are Periplasmic-facing. A helical membrane pass occupies residues L342 to L362. Topologically, residues Q363–S395 are cytoplasmic. The helical transmembrane segment at M396–F416 threads the bilayer. Residues G417–T430 are Periplasmic-facing. A helical membrane pass occupies residues V431–A451. The Cytoplasmic portion of the chain corresponds to R452 to Q471.

Belongs to the major facilitator superfamily. TCR/Tet family.

The protein resides in the cell inner membrane. The protein is Putative multidrug resistance protein MdtD of Escherichia coli O45:K1 (strain S88 / ExPEC).